The chain runs to 253 residues: Chitooligosaccharide deacetylase (253 aa).

Mg(2+)-binding residues include histidine 61 and histidine 125.

This sequence belongs to the YdjC deacetylase family. ChbG subfamily. As to quaternary structure, homodimer. It depends on Mg(2+) as a cofactor.

The protein resides in the cytoplasm. It carries out the reaction N,N'-diacetylchitobiose + H2O = N-acetyl-beta-D-glucosaminyl-(1-&gt;4)-D-glucosamine + acetate. It catalyses the reaction diacetylchitobiose-6'-phosphate + H2O = N'-monoacetylchitobiose-6'-phosphate + acetate. The protein operates within glycan degradation; chitin degradation. Functionally, involved in the degradation of chitin. ChbG is essential for growth on the acetylated chitooligosaccharides chitobiose and chitotriose but is dispensable for growth on cellobiose and chitosan dimer, the deacetylated form of chitobiose. Deacetylation of chitobiose-6-P and chitotriose-6-P is necessary for both the activation of the chb promoter by the regulatory protein ChbR and the hydrolysis of phosphorylated beta-glucosides by the phospho-beta-glucosidase ChbF. Catalyzes the removal of only one acetyl group from chitobiose-6-P to yield monoacetylchitobiose-6-P, the inducer of ChbR and the substrate of ChbF. The polypeptide is Chitooligosaccharide deacetylase (Proteus mirabilis (strain HI4320)).